The following is an 832-amino-acid chain: Translation initiation factor IF-2 (832 aa).

The segment at 1–249 is disordered; it reads MSDDNDKPRT…GGGSSAPREK (249 aa). Pro residues predominate over residues 53 to 71; it reads TPAPAPEPAPEPAPAPAPA. Residues 89 to 144 show a composition bias toward basic and acidic residues; the sequence is PQERVARLQREAEEERLKLAEDARKRDDQKAKQNADDEKKRQEENKKAEEEAEKQA. Residues 145 to 156 show a composition bias toward low complexity; sequence AAEAEAAAAAEA. Basic and acidic residues predominate over residues 180-200; sequence PEPKRPEKKKEEKKPARGGAK. In terms of domain architecture, tr-type G spans 333 to 503; the sequence is PRPPVVTIMG…ELQAELLELK (171 aa). The segment at 342-349 is G1; the sequence is GHVDHGKT. Position 342–349 (342–349) interacts with GTP; that stretch reads GHVDHGKT. Residues 367–371 form a G2 region; the sequence is GITQH. The tract at residues 389 to 392 is G3; it reads DTPG. Residues 389–393 and 443–446 contribute to the GTP site; these read DTPGH and NKCD. The interval 443 to 446 is G4; the sequence is NKCD. Positions 479 to 481 are G5; that stretch reads SAT.

This sequence belongs to the TRAFAC class translation factor GTPase superfamily. Classic translation factor GTPase family. IF-2 subfamily.

Its subcellular location is the cytoplasm. In terms of biological role, one of the essential components for the initiation of protein synthesis. Protects formylmethionyl-tRNA from spontaneous hydrolysis and promotes its binding to the 30S ribosomal subunits. Also involved in the hydrolysis of GTP during the formation of the 70S ribosomal complex. In Erythrobacter litoralis (strain HTCC2594), this protein is Translation initiation factor IF-2.